We begin with the raw amino-acid sequence, 364 residues long: Methylthioribose-1-phosphate isomerase (364 aa).

Asp254 functions as the Proton donor in the catalytic mechanism.

This sequence belongs to the eIF-2B alpha/beta/delta subunits family. MtnA subfamily.

The protein resides in the cytoplasm. It is found in the nucleus. It catalyses the reaction 5-(methylsulfanyl)-alpha-D-ribose 1-phosphate = 5-(methylsulfanyl)-D-ribulose 1-phosphate. It participates in amino-acid biosynthesis; L-methionine biosynthesis via salvage pathway; L-methionine from S-methyl-5-thio-alpha-D-ribose 1-phosphate: step 1/6. Functionally, catalyzes the interconversion of methylthioribose-1-phosphate (MTR-1-P) into methylthioribulose-1-phosphate (MTRu-1-P). The polypeptide is Methylthioribose-1-phosphate isomerase (Drosophila simulans (Fruit fly)).